Here is a 147-residue protein sequence, read N- to C-terminus: Hemoglobin subunit beta (147 aa).

Residue V2 is modified to N-acetylvaline. The 145-residue stretch at 3–147 folds into the Globin domain; that stretch reads HLADDEKAAV…VSTALAHKYH (145 aa). S45 carries the phosphoserine modification. K60 bears the N6-acetyllysine mark. H64 serves as a coordination point for heme b. K83 bears the N6-acetyllysine mark. H93 is a heme b binding site. C94 bears the S-nitrosocysteine mark. K145 carries the N6-acetyllysine modification.

The protein belongs to the globin family. As to quaternary structure, heterotetramer of two alpha chains and two beta chains. In terms of tissue distribution, red blood cells.

Involved in oxygen transport from the lung to the various peripheral tissues. The chain is Hemoglobin subunit beta (HBB) from Bradypus tridactylus (Pale-throated three-toed sloth).